The following is a 394-amino-acid chain: Mannosyl-3-phosphoglycerate synthase (394 aa).

The protein belongs to the glycosyltransferase 2 family.

The protein resides in the cytoplasm. The catalysed reaction is (2R)-3-phosphoglycerate + GDP-alpha-D-mannose = 2-O-(alpha-D-mannosyl)-3-phosphoglycerate + GDP + H(+). It functions in the pathway carbohydrate biosynthesis; 2-(alpha-D-mannosyl)-D-glycerate biosynthesis; 2-(alpha-D-mannosyl)-D-glycerate from GDP-alpha-D-mannose (MPG route): step 1/2. In terms of biological role, transfers a mannosyl group from GDP-mannose to phosphoglycerate to form mannosyl-3-phosphoglycerate (MPG). The protein is Mannosyl-3-phosphoglycerate synthase (mngA) of Pyrococcus abyssi (strain GE5 / Orsay).